The primary structure comprises 689 residues: Elongation factor G (689 aa).

Positions lysine 8 to valine 282 constitute a tr-type G domain. GTP contacts are provided by residues alanine 17–threonine 24, aspartate 81–histidine 85, and asparagine 135–aspartate 138.

The protein belongs to the TRAFAC class translation factor GTPase superfamily. Classic translation factor GTPase family. EF-G/EF-2 subfamily.

Its subcellular location is the cytoplasm. Functionally, catalyzes the GTP-dependent ribosomal translocation step during translation elongation. During this step, the ribosome changes from the pre-translocational (PRE) to the post-translocational (POST) state as the newly formed A-site-bound peptidyl-tRNA and P-site-bound deacylated tRNA move to the P and E sites, respectively. Catalyzes the coordinated movement of the two tRNA molecules, the mRNA and conformational changes in the ribosome. This Halothermothrix orenii (strain H 168 / OCM 544 / DSM 9562) protein is Elongation factor G.